A 126-amino-acid polypeptide reads, in one-letter code: Defensin-like protein 183 (126 aa).

The signal sequence occupies residues 1–26 (MEKALSLVVFIIFSIMLASVENKVNA). Intrachain disulfides connect C29–C68, C36–C55, C39–C62, C43–C64, C80–C126, C91–C111, C96–C120, and C100–C122.

The protein belongs to the DEFL family.

It is found in the secreted. The chain is Defensin-like protein 183 (LCR19) from Arabidopsis thaliana (Mouse-ear cress).